The primary structure comprises 585 residues: Cytoplasmic polyadenylation element-binding protein 1 (585 aa).

The disordered stretch occupies residues 1 to 32; sequence MQHQLKACGDVKTSSRAQQNHRRSTAASAKRS. 2 RRM domains span residues 251–356 and 373–444; these read RKVF…PWRL and RTVF…HAET. The tract at residues 513 to 533 is disordered; sequence DQTRILPRPPHHPAAHHSHQR. Residues 521–532 show a composition bias toward basic residues; it reads PPHHPAAHHSHQ.

In terms of assembly, interacts with fbf-1.

In terms of biological role, cytoplasmic polyadenylation element binding protein that binds to and regulates the translation of specific mRNAs. Essential for progression through meiosis. Involved in spermatogenesis. The chain is Cytoplasmic polyadenylation element-binding protein 1 (cpb-1) from Caenorhabditis briggsae.